The chain runs to 198 residues: Small ribosomal subunit protein uS4c (198 aa).

Residues Leu-85 to Cys-145 form the S4 RNA-binding domain.

This sequence belongs to the universal ribosomal protein uS4 family. As to quaternary structure, part of the 30S ribosomal subunit.

The protein localises to the plastid. Its subcellular location is the apicoplast. Functionally, one of the primary rRNA binding proteins, it binds directly to 16S rRNA where it nucleates assembly of the body of the 30S subunit. This chain is Small ribosomal subunit protein uS4c (rps4), found in Toxoplasma gondii.